Consider the following 563-residue polypeptide: Cystathionine gamma-synthase-like protein ankD (563 aa).

The segment at 1-37 (MGELGPASAQHGSDSISFSGSYTQPLGAPQPPNEPHA) is disordered. The segment covering 10-24 (QHGSDSISFSGSYTQ) has biased composition (polar residues).

The protein belongs to the trans-sulfuration enzymes family. MET7 subfamily. Pyridoxal 5'-phosphate serves as cofactor.

It carries out the reaction cyclo(L-arginyl-(Z)-dehydro-3,4-dihydroxytyrosyl) + O-acetyl-L-homoserine = cyclo(L-arginyl-(Z)-dehydro-4-O-homoseryl-tyrosyl) + acetate + H(+). It functions in the pathway secondary metabolite biosynthesis. Functionally, cystathionine gamma-synthase-like protein; part of the ank cluster that mediates the biosynthesis of NK13650 C, a highly modified cyclo-arginine-tyrosine dipeptide. AnkD catalyzes the attachment of L-homoserine moiety using O-acetyl-L-homoserine as co-substrate. Within the pathway, the cyclodipeptide synthase ankA acts as the scaffold-generating enzyme and is responsible for formation of the cyclo-Arg-Tyr diketopiperazine (cRY) from L-Arg and L-Tyr. The ankA product cRY is desaturated by the cytochrome P450 monooxygenase ankB to yield a dehydro-cyclodipeptide intermediate. The FAD-dependent monooxygenase ankC then installs the m-OH, ankD catalyzes the attachment of L-homoserine, and ankE ligates citrate to the ankD product to yield NK13650 B. The O-methyltransferase ankF is responsible for methylation of the C-17 phenol group of NK13650 B to produce NK13650 D. Amidation of NK13650 D with L-Asp by ankG then leads to the production of NK13650 C, whereas amidation of NK13650 B produces NK13650 A. This chain is Cystathionine gamma-synthase-like protein ankD, found in Aspergillus thermomutatus (Neosartorya pseudofischeri).